Reading from the N-terminus, the 239-residue chain is 4-hydroxy-tetrahydrodipicolinate reductase (239 aa).

NAD(+) is bound by residues 9–14 (GINGKM), 78–80 (GTT), and 104–107 (APNF). The active-site Proton donor/acceptor is histidine 134. Histidine 135 contacts (S)-2,3,4,5-tetrahydrodipicolinate. Lysine 138 serves as the catalytic Proton donor. 144–145 (GT) provides a ligand contact to (S)-2,3,4,5-tetrahydrodipicolinate.

Belongs to the DapB family.

Its subcellular location is the cytoplasm. It carries out the reaction (S)-2,3,4,5-tetrahydrodipicolinate + NAD(+) + H2O = (2S,4S)-4-hydroxy-2,3,4,5-tetrahydrodipicolinate + NADH + H(+). It catalyses the reaction (S)-2,3,4,5-tetrahydrodipicolinate + NADP(+) + H2O = (2S,4S)-4-hydroxy-2,3,4,5-tetrahydrodipicolinate + NADPH + H(+). It participates in amino-acid biosynthesis; L-lysine biosynthesis via DAP pathway; (S)-tetrahydrodipicolinate from L-aspartate: step 4/4. In terms of biological role, catalyzes the conversion of 4-hydroxy-tetrahydrodipicolinate (HTPA) to tetrahydrodipicolinate. The sequence is that of 4-hydroxy-tetrahydrodipicolinate reductase from Coxiella burnetii (strain Dugway 5J108-111).